The following is a 208-amino-acid chain: Small ribosomal subunit protein uS4 (208 aa).

The S4 RNA-binding domain occupies 98 to 160 (CRLDNVVYRM…AKKQSRIQLA (63 aa)).

This sequence belongs to the universal ribosomal protein uS4 family. Part of the 30S ribosomal subunit. Contacts protein S5. The interaction surface between S4 and S5 is involved in control of translational fidelity.

One of the primary rRNA binding proteins, it binds directly to 16S rRNA where it nucleates assembly of the body of the 30S subunit. Its function is as follows. With S5 and S12 plays an important role in translational accuracy. The protein is Small ribosomal subunit protein uS4 of Vesicomyosocius okutanii subsp. Calyptogena okutanii (strain HA).